Here is a 631-residue protein sequence, read N- to C-terminus: tRNA uridine 5-carboxymethylaminomethyl modification enzyme MnmG (631 aa).

Residues 15 to 20, Val127, and Ser182 each bind FAD; that span reads GGGHAG. 275-289 contacts NAD(+); that stretch reads GPRYCPSIEDKIVRF. Gln372 contacts FAD.

This sequence belongs to the MnmG family. As to quaternary structure, homodimer. Heterotetramer of two MnmE and two MnmG subunits. It depends on FAD as a cofactor.

It localises to the cytoplasm. NAD-binding protein involved in the addition of a carboxymethylaminomethyl (cmnm) group at the wobble position (U34) of certain tRNAs, forming tRNA-cmnm(5)s(2)U34. The protein is tRNA uridine 5-carboxymethylaminomethyl modification enzyme MnmG of Buchnera aphidicola subsp. Schizaphis graminum (strain Sg).